Reading from the N-terminus, the 480-residue chain is Adenosylhomocysteinase (480 aa).

Substrate contacts are provided by Thr63, Asp142, and Glu203. 204–206 (TTT) serves as a coordination point for NAD(+). Positions 233 and 237 each coordinate substrate. NAD(+)-binding positions include Asn238, 267-272 (GYGDVG), Glu290, Asn325, 346-348 (IGH), and Asn394.

It belongs to the adenosylhomocysteinase family. NAD(+) serves as cofactor.

It localises to the cytoplasm. It carries out the reaction S-adenosyl-L-homocysteine + H2O = L-homocysteine + adenosine. It participates in amino-acid biosynthesis; L-homocysteine biosynthesis; L-homocysteine from S-adenosyl-L-homocysteine: step 1/1. May play a key role in the regulation of the intracellular concentration of adenosylhomocysteine. This chain is Adenosylhomocysteinase, found in Xylella fastidiosa (strain M12).